The chain runs to 173 residues: Shikimate kinase (173 aa).

Residue 14–19 (GAGKST) coordinates ATP. Position 18 (S18) interacts with Mg(2+). Substrate-binding residues include D36, R60, and G82. Position 120 (R120) interacts with ATP. A substrate-binding site is contributed by R139. Residue Q156 coordinates ATP.

This sequence belongs to the shikimate kinase family. In terms of assembly, monomer. It depends on Mg(2+) as a cofactor.

It is found in the cytoplasm. The enzyme catalyses shikimate + ATP = 3-phosphoshikimate + ADP + H(+). The protein operates within metabolic intermediate biosynthesis; chorismate biosynthesis; chorismate from D-erythrose 4-phosphate and phosphoenolpyruvate: step 5/7. Functionally, catalyzes the specific phosphorylation of the 3-hydroxyl group of shikimic acid using ATP as a cosubstrate. The polypeptide is Shikimate kinase (Actinobacillus pleuropneumoniae serotype 5b (strain L20)).